A 479-amino-acid polypeptide reads, in one-letter code: Replication factor C large subunit (479 aa).

50–57 lines the ATP pocket; that stretch reads GPPGSGKT. Over residues 420–468 the composition is skewed to basic and acidic residues; sequence EKIRKERKEEEKVEVREEKPEEKVEEKREERETKKEKEKKEEKKAEKKG. Residues 420–479 form a disordered region; it reads EKIRKERKEEEKVEVREEKPEEKVEEKREERETKKEKEKKEEKKAEKKGKQVTLFDFIKK.

This sequence belongs to the activator 1 small subunits family. RfcL subfamily. Heterohexamer composed of four small subunits (RfcS) and two large subunits (RfcL).

Its function is as follows. Part of the RFC clamp loader complex which loads the PCNA sliding clamp onto DNA. The complex possesses DNA-independent ATPase activity. This chain is Replication factor C large subunit (rfcL), found in Pyrococcus abyssi (strain GE5 / Orsay).